Consider the following 213-residue polypeptide: Large ribosomal subunit protein uL1 (213 aa).

The protein belongs to the universal ribosomal protein uL1 family. Part of the 50S ribosomal subunit.

Binds directly to 23S rRNA. Probably involved in E site tRNA release. Functionally, protein L1 is also a translational repressor protein, it controls the translation of its operon by binding to its mRNA. This is Large ribosomal subunit protein uL1 from Picrophilus torridus (strain ATCC 700027 / DSM 9790 / JCM 10055 / NBRC 100828 / KAW 2/3).